Reading from the N-terminus, the 669-residue chain is Glycine--tRNA ligase beta subunit (669 aa).

The protein belongs to the class-II aminoacyl-tRNA synthetase family. Tetramer of two alpha and two beta subunits.

The protein resides in the cytoplasm. The enzyme catalyses tRNA(Gly) + glycine + ATP = glycyl-tRNA(Gly) + AMP + diphosphate. The chain is Glycine--tRNA ligase beta subunit from Phenylobacterium zucineum (strain HLK1).